Reading from the N-terminus, the 246-residue chain is UDP-N-acetyl-D-mannosaminuronic acid transferase (246 aa).

Belongs to the glycosyltransferase 26 family.

It catalyses the reaction UDP-N-acetyl-alpha-D-mannosaminouronate + N-acetyl-alpha-D-glucosaminyl-di-trans,octa-cis-undecaprenyl diphosphate = beta-D-ManNAcA-(1-&gt;4)-alpha-D-GlcNAc-di-trans,octa-cis-undecaprenyl diphosphate + UDP + H(+). Its pathway is bacterial outer membrane biogenesis; enterobacterial common antigen biosynthesis. Its function is as follows. Catalyzes the synthesis of Und-PP-GlcNAc-ManNAcA (Lipid II), the second lipid-linked intermediate involved in enterobacterial common antigen (ECA) synthesis. This chain is UDP-N-acetyl-D-mannosaminuronic acid transferase, found in Escherichia coli O7:K1 (strain IAI39 / ExPEC).